The following is a 593-amino-acid chain: Acetyl-coenzyme A transferase nodX (593 aa).

The segment at 572–593 (DEDEQGSGFRSGSGLGSGSIAD) is disordered. Positions 580–593 (FRSGSGLGSGSIAD) are enriched in gly residues.

This sequence belongs to the CoA-transferase III family.

Its pathway is secondary metabolite biosynthesis. Functionally, acetyl-coenzyme A transferase; part of the gene cluster that mediates the biosynthesis of the indole diterpenes nodulisporic acids (NA). Nodulisporic acid A (NAA) and its chemically modified derivatives are of particular significance because of their highly potent insecticidal activity against blood-feeding arthropods and lack of observable adverse effects on mammals, in particular the tremogenicity associated with the paspaline-derived IDTs is not observed. The geranylgeranyl diphosphate (GGPP) synthase ggs1, localized outside of the cluster, is proposed to catalyze the first step in nodulisporic acid biosynthesis via conversion of farnesyl pyrophosphate and isopentyl pyrophosphate into geranylgeranyl pyrophosphate (GGPP). Condensation of indole-3-glycerol phosphate with GGPP by the prenyl transferase nodC then forms 3-geranylgeranylindole (3-GGI). Epoxidation by the FAD-dependent monooxygenase nodM leads to a single-epoxidized-GGI that is substrate of the terpene cyclase nodB for cyclization to yield emindole SB. The terminal methyl carbon, C28, of emindole SB is then oxidized by the cytochrome P450 monooxygenase nodW to produce nodulisporic acid F (NAF), the pentacyclic core of NAA. NAF is converted to nodulisporic acid E (NAE) via prenylation. This step is probably performed by one of the indole diterpene prenyltransferases nodD1 or nodD2. Several oxidation steps performed by the FAD-linked oxidoreductase nodO and one of the cytochrome P450 monooxygenase nodR, nodX or nodZ further convert NAE to nodulisporic acid D (NAD). NAD is substrate of cytochrome P450 monooxygenase nodJ to produce the precursor of nodulisporic acid C (NAC), converted to NAC by one of the indole diterpene prenyltransferases nodD1 or nodD2. The FAD-dependent monooxygenase nodY2 then oxidizes NAC to nodulisporic acid B (NAB). Finally NAB is converted to NAA by one of the cytochrome P450 monooxygenases nodR, nodX or nodZ. In Hypoxylon pulicicidum, this protein is Acetyl-coenzyme A transferase nodX.